Consider the following 62-residue polypeptide: Photosystem II reaction center protein Z (62 aa).

A run of 2 helical transmembrane segments spans residues 8–28 (AVFALIATSSILLISVPVVFA) and 41–61 (FSGTSLWIGLVFLVGILNSLI).

It belongs to the PsbZ family. PSII is composed of 1 copy each of membrane proteins PsbA, PsbB, PsbC, PsbD, PsbE, PsbF, PsbH, PsbI, PsbJ, PsbK, PsbL, PsbM, PsbT, PsbY, PsbZ, Psb30/Ycf12, at least 3 peripheral proteins of the oxygen-evolving complex and a large number of cofactors. It forms dimeric complexes.

Its subcellular location is the plastid. It localises to the chloroplast thylakoid membrane. In terms of biological role, may control the interaction of photosystem II (PSII) cores with the light-harvesting antenna, regulates electron flow through the 2 photosystem reaction centers. PSII is a light-driven water plastoquinone oxidoreductase, using light energy to abstract electrons from H(2)O, generating a proton gradient subsequently used for ATP formation. In Vitis vinifera (Grape), this protein is Photosystem II reaction center protein Z.